Here is a 158-residue protein sequence, read N- to C-terminus: MKFGCLSFRQPYAGFVLNGVKTVETRWRPLLSSQRNCTIAIHIAHRDWEGDAWWELLVERFGMTPAQIQALLREGEKFGRGVIAGLVDIGETLQCPEDLTPDEVVELENQAVLTNLKQKYLTVISNPRWLLEPIPRKGGRDVFQVDIPEHLIPLGHEV.

The region spanning 6–92 is the ASCH domain; the sequence is LSFRQPYAGF…IAGLVDIGET (87 aa).

This sequence belongs to the EOLA family.

In Pongo abelii (Sumatran orangutan), this protein is EOLA-like protein.